Here is a 640-residue protein sequence, read N- to C-terminus: MSAGYRSMAISASDRERGQQSMAMLVLAALGVVYGDLGTSPLYALQEAFNGDHGVRPTPDNVVGVVSLFLWSLILMVSVKYVMVLMRADNKGEGGILALLAQITGGRSGDGRRVAVGWVLLGLAGAAMLYGDGVITPAVSVLSAMEGLQVATPALAAYVVPATVVILAMLFMIQPFGSGRVGAAFGPILAAWFVAIAALGLAQLWRNPAILQAVNPWHGIAYFQRNGFAGFVSLGAVVLCLTGAEALYADMGHFGARPIRLAWYGLALPALILSYLGQGALLLAHPQLSGRPFYSMVPEWGLLPMVALSTLATIVASQALITAVFSLTHQSAQLGFFPRVKVLHTSGSHKGQIYLPLLNWTLMLATIAVVLGFRESGKLAAAFGLAVSTTMAITTVLFAVLARRRWHWPWWAVALVAGSLFAIDLAFWLANALKFLDGGWLPLLLGLAVFCVMGCWFGGRRLQMRESRGRQLPLEALLSSLGMNPVARIPGVGVFLSERADGTPLVLLHHLKHNQALHETAILLTLQMLDVPRAAGERVSAQWLGQGMARVTARYGYMEEPDVPEAMARAAEALGLPPLEPLSTSYYLGRQTLVAAPGSGGLKRWLVGVFAFLRQNERSATLYFGLPPNRVVELGARIEL.

12 consecutive transmembrane segments (helical) span residues Leu25–Leu45, Val65–Leu85, Ala115–Ile135, Pro153–Ile173, Val181–Leu201, Gly227–Leu247, Trp263–Leu283, Met305–Phe325, Ile353–Phe373, Ala381–Leu401, Trp410–Ala430, and Gly438–Gly458.

This sequence belongs to the HAK/KUP transporter (TC 2.A.72) family.

It is found in the cell inner membrane. The enzyme catalyses K(+)(in) + H(+)(in) = K(+)(out) + H(+)(out). Functionally, transport of potassium into the cell. Likely operates as a K(+):H(+) symporter. This chain is Probable potassium transport system protein Kup 1, found in Chromobacterium violaceum (strain ATCC 12472 / DSM 30191 / JCM 1249 / CCUG 213 / NBRC 12614 / NCIMB 9131 / NCTC 9757 / MK).